The following is a 383-amino-acid chain: 8-amino-7-oxononanoate synthase (383 aa).

R20 lines the substrate pocket. 107–108 serves as a coordination point for pyridoxal 5'-phosphate; the sequence is GY. Residue H132 participates in substrate binding. The pyridoxal 5'-phosphate site is built by S178, H206, and T233. K236 is modified (N6-(pyridoxal phosphate)lysine). Position 349 (T349) interacts with substrate.

This sequence belongs to the class-II pyridoxal-phosphate-dependent aminotransferase family. BioF subfamily. As to quaternary structure, homodimer. Requires pyridoxal 5'-phosphate as cofactor.

It carries out the reaction 6-carboxyhexanoyl-[ACP] + L-alanine + H(+) = (8S)-8-amino-7-oxononanoate + holo-[ACP] + CO2. The protein operates within cofactor biosynthesis; biotin biosynthesis. Its function is as follows. Catalyzes the decarboxylative condensation of pimeloyl-[acyl-carrier protein] and L-alanine to produce 8-amino-7-oxononanoate (AON), [acyl-carrier protein], and carbon dioxide. The chain is 8-amino-7-oxononanoate synthase from Chromobacterium violaceum (strain ATCC 12472 / DSM 30191 / JCM 1249 / CCUG 213 / NBRC 12614 / NCIMB 9131 / NCTC 9757 / MK).